The sequence spans 460 residues: ATP synthase subunit beta (460 aa).

150–157 (GGAGVGKT) lines the ATP pocket.

It belongs to the ATPase alpha/beta chains family. F-type ATPases have 2 components, CF(1) - the catalytic core - and CF(0) - the membrane proton channel. CF(1) has five subunits: alpha(3), beta(3), gamma(1), delta(1), epsilon(1). CF(0) has three main subunits: a(1), b(2) and c(9-12). The alpha and beta chains form an alternating ring which encloses part of the gamma chain. CF(1) is attached to CF(0) by a central stalk formed by the gamma and epsilon chains, while a peripheral stalk is formed by the delta and b chains.

It is found in the cell inner membrane. It catalyses the reaction ATP + H2O + 4 H(+)(in) = ADP + phosphate + 5 H(+)(out). In terms of biological role, produces ATP from ADP in the presence of a proton gradient across the membrane. The catalytic sites are hosted primarily by the beta subunits. This is ATP synthase subunit beta from Photorhabdus laumondii subsp. laumondii (strain DSM 15139 / CIP 105565 / TT01) (Photorhabdus luminescens subsp. laumondii).